A 173-amino-acid polypeptide reads, in one-letter code: NADH-ubiquinone oxidoreductase chain 6 (173 aa).

A run of 5 helical transmembrane segments spans residues Met1 to Ser21, Tyr27 to Gly47, Ala48 to Val68, Val87 to Phe107, and Trp139 to Leu159.

It belongs to the complex I subunit 6 family.

The protein localises to the mitochondrion membrane. It catalyses the reaction a ubiquinone + NADH + 5 H(+)(in) = a ubiquinol + NAD(+) + 4 H(+)(out). In terms of biological role, core subunit of the mitochondrial membrane respiratory chain NADH dehydrogenase (Complex I) that is believed to belong to the minimal assembly required for catalysis. Complex I functions in the transfer of electrons from NADH to the respiratory chain. The immediate electron acceptor for the enzyme is believed to be ubiquinone. The sequence is that of NADH-ubiquinone oxidoreductase chain 6 (MT-ND6) from Brachyramphus brevirostris (Kittlitz's murrelet).